Reading from the N-terminus, the 102-residue chain is Small ribosomal subunit protein bS20 (102 aa).

It belongs to the bacterial ribosomal protein bS20 family.

In terms of biological role, binds directly to 16S ribosomal RNA. The polypeptide is Small ribosomal subunit protein bS20 (Synechococcus sp. (strain WH7803)).